We begin with the raw amino-acid sequence, 345 residues long: UDP-3-O-acylglucosamine N-acyltransferase (345 aa).

Histidine 252 (proton acceptor) is an active-site residue.

This sequence belongs to the transferase hexapeptide repeat family. LpxD subfamily. Homotrimer.

The enzyme catalyses a UDP-3-O-[(3R)-3-hydroxyacyl]-alpha-D-glucosamine + a (3R)-hydroxyacyl-[ACP] = a UDP-2-N,3-O-bis[(3R)-3-hydroxyacyl]-alpha-D-glucosamine + holo-[ACP] + H(+). The protein operates within bacterial outer membrane biogenesis; LPS lipid A biosynthesis. In terms of biological role, catalyzes the N-acylation of UDP-3-O-acylglucosamine using 3-hydroxyacyl-ACP as the acyl donor. Is involved in the biosynthesis of lipid A, a phosphorylated glycolipid that anchors the lipopolysaccharide to the outer membrane of the cell. The protein is UDP-3-O-acylglucosamine N-acyltransferase of Rickettsia rickettsii.